The primary structure comprises 574 residues: Proline--tRNA ligase (574 aa).

This sequence belongs to the class-II aminoacyl-tRNA synthetase family. ProS type 1 subfamily. As to quaternary structure, homodimer.

It localises to the cytoplasm. The enzyme catalyses tRNA(Pro) + L-proline + ATP = L-prolyl-tRNA(Pro) + AMP + diphosphate. Catalyzes the attachment of proline to tRNA(Pro) in a two-step reaction: proline is first activated by ATP to form Pro-AMP and then transferred to the acceptor end of tRNA(Pro). As ProRS can inadvertently accommodate and process non-cognate amino acids such as alanine and cysteine, to avoid such errors it has two additional distinct editing activities against alanine. One activity is designated as 'pretransfer' editing and involves the tRNA(Pro)-independent hydrolysis of activated Ala-AMP. The other activity is designated 'posttransfer' editing and involves deacylation of mischarged Ala-tRNA(Pro). The misacylated Cys-tRNA(Pro) is not edited by ProRS. The polypeptide is Proline--tRNA ligase (Anaeromyxobacter sp. (strain K)).